Reading from the N-terminus, the 437-residue chain is Trigger factor (437 aa).

Residues 161–246 (DDQVNIDFVG…VNSVSAPQLP (86 aa)) form the PPIase FKBP-type domain.

The protein belongs to the FKBP-type PPIase family. Tig subfamily.

It localises to the cytoplasm. It carries out the reaction [protein]-peptidylproline (omega=180) = [protein]-peptidylproline (omega=0). Its function is as follows. Involved in protein export. Acts as a chaperone by maintaining the newly synthesized protein in an open conformation. Functions as a peptidyl-prolyl cis-trans isomerase. This is Trigger factor from Pseudomonas putida (strain W619).